The sequence spans 210 residues: MKELDQLTKGTTTVGILADKGVVLAADRRAVMGNLIAGKQVKKIFRIHDYIGVTTAGSVADAQKIVDLMRAEARLYELRHNRMISARALANMISHVLHSSLKAFRPYLVQLIVGGFNDDDPALYNLDPSGSIIEEDYTATGSGSPTAYGVLEAEYEEGMSLDDAIEVAVRAVKSALERDTGTGEGVTVVTITREEGYRELPEEEVEKLLS.

The propeptide at 1 to 10 is removed in mature form; by autocatalysis; sequence MKELDQLTKG. Thr11 functions as the Nucleophile in the catalytic mechanism.

Belongs to the peptidase T1B family. The 20S proteasome core is composed of 14 alpha and 14 beta subunits that assemble into four stacked heptameric rings, resulting in a barrel-shaped structure. The two inner rings, each composed of seven catalytic beta subunits, are sandwiched by two outer rings, each composed of seven alpha subunits. The catalytic chamber with the active sites is on the inside of the barrel. Has a gated structure, the ends of the cylinder being occluded by the N-termini of the alpha-subunits. Is capped at one or both ends by the proteasome regulatory ATPase, PAN.

It localises to the cytoplasm. It catalyses the reaction Cleavage of peptide bonds with very broad specificity.. With respect to regulation, the formation of the proteasomal ATPase PAN-20S proteasome complex, via the docking of the C-termini of PAN into the intersubunit pockets in the alpha-rings, triggers opening of the gate for substrate entry. Interconversion between the open-gate and close-gate conformations leads to a dynamic regulation of the 20S proteasome proteolysis activity. Functionally, component of the proteasome core, a large protease complex with broad specificity involved in protein degradation. This chain is Proteasome subunit beta, found in Methanopyrus kandleri (strain AV19 / DSM 6324 / JCM 9639 / NBRC 100938).